Consider the following 458-residue polypeptide: N-acetylgalactosamine kinase (458 aa).

Positions 43, 49, 50, and 52 each coordinate alpha-D-galactose. ATP-binding residues include glycine 143, serine 145, and serine 146. Aspartate 190 lines the alpha-D-galactose pocket. Aspartate 190 (proton acceptor) is an active-site residue. Residues asparagine 233 and lysine 234 each contribute to the ATP site.

The protein belongs to the GHMP kinase family. GalK subfamily. In terms of assembly, monomer.

The enzyme catalyses N-acetyl-alpha-D-galactosamine + ATP = N-acetyl-alpha-D-galactosamine 1-phosphate + ADP + H(+). Functionally, acts on GalNAc. Also acts as a galactokinase when galactose is present at high concentrations. This chain is N-acetylgalactosamine kinase (GALK2), found in Pongo abelii (Sumatran orangutan).